A 174-amino-acid chain; its full sequence is uncharacterized protein (174 aa).

This sequence belongs to the mimivirus L39/R874 family.

This is an uncharacterized protein from Acanthamoeba polyphaga (Amoeba).